A 440-amino-acid chain; its full sequence is Xylose isomerase (440 aa).

Active-site residues include His100 and Asp103. Positions 231, 267, 270, 295, 306, 308, and 338 each coordinate Mg(2+).

Belongs to the xylose isomerase family. In terms of assembly, homotetramer. The cofactor is Mg(2+).

It is found in the cytoplasm. It catalyses the reaction alpha-D-xylose = alpha-D-xylulofuranose. The chain is Xylose isomerase from Burkholderia cenocepacia (strain HI2424).